Reading from the N-terminus, the 299-residue chain is Taste receptor type 2 member 50 (299 aa).

Met-1 is a topological domain (extracellular). The helical transmembrane segment at 2–22 threads the bilayer; the sequence is VTFLHIFFSILILVLFVLGNF. The Cytoplasmic portion of the chain corresponds to 23–55; it reads ANGFIALVNFIDLVKRKKISSADQILTALAVSR. Residues 56–76 form a helical membrane-spanning segment; sequence IGLLWALLLNWYLTVLNPAFY. At 77-87 the chain is on the extracellular side; the sequence is SVELRITSYNA. The helical transmembrane segment at 88-108 threads the bilayer; that stretch reads WVVTNHFSMWLAASLSIFYLL. The Cytoplasmic portion of the chain corresponds to 109 to 126; that stretch reads KIANFSNLIFLHLKRRVR. The chain crosses the membrane as a helical span at residues 127-147; it reads SVILVILLGPLTFLVCHLFVA. Over 148 to 181 the chain is Extracellular; that stretch reads NMDESMSAEEYEGNMTGKLKLRNTVHLSYLTVTT. An N-linked (GlcNAc...) asparagine glycan is attached at Asn-161. The helical transmembrane segment at 182-202 threads the bilayer; the sequence is LWSFIPFTLSLISFLMLICSL. The Cytoplasmic portion of the chain corresponds to 203–229; the sequence is CKHVKKMQLHGEGSQDLSTKVHIKALQ. A helical transmembrane segment spans residues 230-250; that stretch reads TLISFLLLCAIFFLFLIISIW. At 251–259 the chain is on the extracellular side; sequence NPRRLQNDP. A helical membrane pass occupies residues 260 to 280; it reads VVVVSKAVGNIYLALDSFILI. Topologically, residues 281–299 are cytoplasmic; the sequence is WRTKKLKHTFLLILCQIRC.

It belongs to the G-protein coupled receptor T2R family.

The protein localises to the membrane. Receptor that may play a role in the perception of bitterness and is gustducin-linked. May play a role in sensing the chemical composition of the gastrointestinal content. The activity of this receptor may stimulate alpha gustducin, mediate PLC-beta-2 activation and lead to the gating of TRPM5. This Pongo pygmaeus (Bornean orangutan) protein is Taste receptor type 2 member 50 (TAS2R50).